Consider the following 270-residue polypeptide: Oxidoreductase claK (270 aa).

This sequence belongs to the avfA family.

It functions in the pathway pigment biosynthesis. In terms of biological role, oxidoreductase; part of the gene cluster that mediates the biosynthesis of the bianthraquinone cladofulvin, a conidial pigment not required for virulence but that plays a role in fitness and resistance to environmental stresses including UV light and low-temperature stress. The pathway begins with the synthesis of atrochrysone thioester by the polyketide synthase (PKS) claG. The atrochrysone carboxyl ACP thioesterase claF then breaks the thioester bond and releases the atrochrysone carboxylic acid from claG. This compound is decarboxylated by claH to yield emodin, which is further converted to chrysophanol hydroquinone by the reductase claC and the dehydratase claB. The cytochrome monooxygenase P450 claM then catalyzes the dimerization of nataloe-emodin to cladofulvin. This is Oxidoreductase claK from Passalora fulva (Tomato leaf mold).